The primary structure comprises 688 residues: UvrABC system protein B (688 aa).

Residues 31-188 (GRVNAGEPDV…RKFVSMQYQR (158 aa)) enclose the Helicase ATP-binding domain. Residue 44–51 (GATGTGKS) coordinates ATP. A Beta-hairpin motif is present at residues 97 to 120 (YYDYYQPEAYVPQTDTFIEKDSSV). One can recognise a Helicase C-terminal domain in the interval 434-587 (QIDDLLEQIR…QVAYNTEHGI (154 aa)). Residues 607–632 (GEDTKKMLEGRGGGKRSPTPNLRREG) are disordered. A UVR domain is found at 642 to 677 (ETIISDLNDQMLQAAGELKFELAARLRDELGDLKRE).

The protein belongs to the UvrB family. Forms a heterotetramer with UvrA during the search for lesions. Interacts with UvrC in an incision complex.

It localises to the cytoplasm. Functionally, the UvrABC repair system catalyzes the recognition and processing of DNA lesions. A damage recognition complex composed of 2 UvrA and 2 UvrB subunits scans DNA for abnormalities. Upon binding of the UvrA(2)B(2) complex to a putative damaged site, the DNA wraps around one UvrB monomer. DNA wrap is dependent on ATP binding by UvrB and probably causes local melting of the DNA helix, facilitating insertion of UvrB beta-hairpin between the DNA strands. Then UvrB probes one DNA strand for the presence of a lesion. If a lesion is found the UvrA subunits dissociate and the UvrB-DNA preincision complex is formed. This complex is subsequently bound by UvrC and the second UvrB is released. If no lesion is found, the DNA wraps around the other UvrB subunit that will check the other stand for damage. The protein is UvrABC system protein B of Clavibacter sepedonicus (Clavibacter michiganensis subsp. sepedonicus).